A 385-amino-acid chain; its full sequence is 3-hydroxyisobutyryl-CoA hydrolase, mitochondrial (385 aa).

Substrate contacts are provided by E120, G145, E168, and D176.

The protein belongs to the enoyl-CoA hydratase/isomerase family.

The protein localises to the mitochondrion. The catalysed reaction is 3-hydroxy-2-methylpropanoyl-CoA + H2O = 3-hydroxy-2-methylpropanoate + CoA + H(+). Its pathway is amino-acid degradation; L-valine degradation. Functionally, hydrolyzes 3-hydroxyisobutyryl-CoA (HIBYL-CoA), a saline catabolite. Has high activity toward isobutyryl-CoA. Could be an isobutyryl-CoA dehydrogenase that functions in valine catabolism. Also hydrolyzes 3-hydroxypropanoyl-CoA. This Xenopus tropicalis (Western clawed frog) protein is 3-hydroxyisobutyryl-CoA hydrolase, mitochondrial (hibch).